We begin with the raw amino-acid sequence, 446 residues long: uncharacterized protein (446 aa).

2 disordered regions span residues 63–95 and 155–232; these read KNKPHDLKNPKRSVSFKYKPNNSRSDLEESDLR and AESS…HPVK. Over residues 156 to 169 the composition is skewed to polar residues; that stretch reads ESSVPTPKLTNESN. Composition is skewed to basic and acidic residues over residues 182–199 and 213–227; these read DQHESRTKKSMHSTDHSA and ITKESELTRNDEARK.

This is an uncharacterized protein from Mus musculus (Mouse).